We begin with the raw amino-acid sequence, 228 residues long: Transcription repressor OFP8 (228 aa).

Composition is skewed to low complexity over residues 1-14, 54-79, and 92-101; these read MSGR…FSLR, ASST…TDSS, and EEPAAAQQEQ. 2 disordered regions span residues 1–21 and 36–143; these read MSGR…VVDI and SSSS…QLQE. Basic residues predominate over residues 107–120; the sequence is RRRRRQQRRRRRRA. Residues 157-216 form the OVATE domain; that stretch reads VAVESAEPYEDFRESMVQMVVEKEIYAWDDLNDLLHQFLSLNSPRHHPLILHAFADLWTR.

Interacts with GSK2. Post-translationally, phosphorylated on serine and threonine residues by GSK2. Dephosphorylated during response to brassinosteroid. As to expression, expressed in roots, stems, stem nodes, young leaves, leaf sheaths, lamina joints, young spikelets, inflorescences, stamens and ovaries, embryos and seeds.

The protein localises to the nucleus. The protein resides in the cytoplasm. Functionally, probable transcriptional repressor that regulates multiple aspects of plant growth and development, partly through brassinosteroid (BR) signaling pathway. Acts downstream of the kinase GSK2, a negative regulator of BR signaling. This is Transcription repressor OFP8 from Oryza sativa subsp. japonica (Rice).